A 778-amino-acid polypeptide reads, in one-letter code: MNKHSFNVLEFDKLKELILANIVIDHNREVIENLEPYKDLSALNNELKTVKDFMDLLSFDGGFEAIGLRNINSLMEKIKLIGTYLEVEELWNINVNLRTVRIFKSRLDELGKYKQLREMIGNIPNLRVIEDVINKTINPEKEIKDDASLDLRDIRLHKKTLNMNIKRKFEELFEEPSLSNAFQEKIITERDGRMVTPVKYDFKGLIKGIEHDRSSSGQTVFIEPLSIVSLNNKMRELETKEKEEIRKILLRIAELLRNNKDDILIIGEKVMYLDILNAKSIYAVENRCEIPTVSNKEILSLEKARHPFIDKDKVTPLTFEIGKDYDILLITGPNTGGKTVALKTAGLLTLMALSGIPIPASENSKIGFFEGVFADIGDEQSIEQSLSSFSAHLKNVKEILEAVTKNSLVLLDELGSGTDPIEGAAFAMAVIDYLNEKKCKSFITTHYSQVKAYGYNEEGIETASMEFNTDTLSPTYRLLVGIPGESNALTIAQRMGLPESIISKAREYISEDNKKVEKMIENIKTKSQELDEMRERFARLQEEARLDRERAKQETLIIEKQKNEIIKSAYEEAEKMMNEMRAKASALVEKIQHEEKNKEDAKQIQKNLNMLSTALREEKNKTVEVVKKIKTKVNFKVGDRVFVKSINQFANILKINTSKESAMVQSGILKLEVPFDEIKIVEEKKEKVYNVNNHKKTPVRSEIDLRGKMVDEAVYELETYLDRATLNGYTEVYVIHGKGTGALREGILKYLKACKYVKEYRIGGHGEGGLGCTVVTLK.

332–339 lines the ATP pocket; it reads GPNTGGKT. The region spanning 703-778 is the Smr domain; sequence IDLRGKMVDE…GLGCTVVTLK (76 aa).

The protein belongs to the DNA mismatch repair MutS family. MutS2 subfamily. As to quaternary structure, homodimer. Binds to stalled ribosomes, contacting rRNA.

In terms of biological role, endonuclease that is involved in the suppression of homologous recombination and thus may have a key role in the control of bacterial genetic diversity. Acts as a ribosome collision sensor, splitting the ribosome into its 2 subunits. Detects stalled/collided 70S ribosomes which it binds and splits by an ATP-hydrolysis driven conformational change. Acts upstream of the ribosome quality control system (RQC), a ribosome-associated complex that mediates the extraction of incompletely synthesized nascent chains from stalled ribosomes and their subsequent degradation. Probably generates substrates for RQC. This is Endonuclease MutS2 from Fusobacterium nucleatum subsp. nucleatum (strain ATCC 25586 / DSM 15643 / BCRC 10681 / CIP 101130 / JCM 8532 / KCTC 2640 / LMG 13131 / VPI 4355).